The primary structure comprises 310 residues: Methionyl-tRNA formyltransferase (310 aa).

(6S)-5,6,7,8-tetrahydrofolate is bound at residue 109-112 (SLLP).

This sequence belongs to the Fmt family.

It carries out the reaction L-methionyl-tRNA(fMet) + (6R)-10-formyltetrahydrofolate = N-formyl-L-methionyl-tRNA(fMet) + (6S)-5,6,7,8-tetrahydrofolate + H(+). In terms of biological role, attaches a formyl group to the free amino group of methionyl-tRNA(fMet). The formyl group appears to play a dual role in the initiator identity of N-formylmethionyl-tRNA by promoting its recognition by IF2 and preventing the misappropriation of this tRNA by the elongation apparatus. The sequence is that of Methionyl-tRNA formyltransferase from Alkaliphilus oremlandii (strain OhILAs) (Clostridium oremlandii (strain OhILAs)).